The chain runs to 347 residues: UDP-N-acetylenolpyruvoylglucosamine reductase (347 aa).

In terms of domain architecture, FAD-binding PCMH-type spans Leu-27 to Met-197. Residue Arg-173 is part of the active site. Ser-247 (proton donor) is an active-site residue. The active site involves Glu-342.

This sequence belongs to the MurB family. Requires FAD as cofactor.

It is found in the cytoplasm. The enzyme catalyses UDP-N-acetyl-alpha-D-muramate + NADP(+) = UDP-N-acetyl-3-O-(1-carboxyvinyl)-alpha-D-glucosamine + NADPH + H(+). It functions in the pathway cell wall biogenesis; peptidoglycan biosynthesis. Its function is as follows. Cell wall formation. This chain is UDP-N-acetylenolpyruvoylglucosamine reductase, found in Alcanivorax borkumensis (strain ATCC 700651 / DSM 11573 / NCIMB 13689 / SK2).